The sequence spans 192 residues: Ribonuclease HII (192 aa).

Residues lysine 2–valine 187 form the RNase H type-2 domain. A divalent metal cation-binding residues include aspartate 8, glutamate 9, and aspartate 97.

This sequence belongs to the RNase HII family. The cofactor is Mn(2+). Mg(2+) is required as a cofactor.

The protein localises to the cytoplasm. The catalysed reaction is Endonucleolytic cleavage to 5'-phosphomonoester.. Functionally, endonuclease that specifically degrades the RNA of RNA-DNA hybrids. The chain is Ribonuclease HII from Aliarcobacter butzleri (strain RM4018) (Arcobacter butzleri).